Consider the following 147-residue polypeptide: Large ribosomal subunit protein uL15 (147 aa).

Residues 1–46 (MSIRLENLSYTPGARKEKHRKGRGHAAGKGKQAGRGQSGQKKRSTV) are disordered. A compositionally biased stretch (basic residues) spans 16-28 (KEKHRKGRGHAAG).

This sequence belongs to the universal ribosomal protein uL15 family. Part of the 50S ribosomal subunit.

Its function is as follows. Binds to the 23S rRNA. This is Large ribosomal subunit protein uL15 from Mesomycoplasma hyopneumoniae (strain 232) (Mycoplasma hyopneumoniae).